A 163-amino-acid polypeptide reads, in one-letter code: Neurotrophin-3 (163 aa).

The signal sequence occupies residues 1-3; sequence IQS. Positions 4-119 are excised as a propeptide; the sequence is TSMDQGILTE…VLNRTSRRKR (116 aa). The N-linked (GlcNAc...) asparagine glycan is linked to asparagine 112. A disordered region spans residues 114-133; it reads TSRRKREGKSHRGEYSVCDS. Positions 123–133 are enriched in basic and acidic residues; sequence SHRGEYSVCDS.

The protein belongs to the NGF-beta family.

The protein localises to the secreted. Its function is as follows. Seems to promote the survival of visceral and proprioceptive sensory neurons. This is Neurotrophin-3 (NTF3) from Lichanura trivirgata (Rosy boa).